A 217-amino-acid chain; its full sequence is 3,4-dihydroxy-2-butanone 4-phosphate synthase (217 aa).

Residues 40–41 (RE), D45, 153–157 (RRGHT), and E177 each bind D-ribulose 5-phosphate. E41 contributes to the Mg(2+) binding site. H156 is a Mg(2+) binding site.

It belongs to the DHBP synthase family. Homodimer. Mg(2+) is required as a cofactor. Mn(2+) serves as cofactor.

The enzyme catalyses D-ribulose 5-phosphate = (2S)-2-hydroxy-3-oxobutyl phosphate + formate + H(+). It participates in cofactor biosynthesis; riboflavin biosynthesis; 2-hydroxy-3-oxobutyl phosphate from D-ribulose 5-phosphate: step 1/1. Its function is as follows. Catalyzes the conversion of D-ribulose 5-phosphate to formate and 3,4-dihydroxy-2-butanone 4-phosphate. The sequence is that of 3,4-dihydroxy-2-butanone 4-phosphate synthase from Aliivibrio fischeri (Vibrio fischeri).